Reading from the N-terminus, the 810-residue chain is Oligoxyloglucan-reducing end-specific xyloglucanase (810 aa).

The signal sequence occupies residues 1 to 28; it reads MRAKNGPGSWLALTAIATSLNTLALAAA. N-linked (GlcNAc...) asparagine glycosylation is present at N32. Catalysis depends on D66, which acts as the Nucleophile. A BNR 1 repeat occupies 126–135; that stretch reads FVSQDRGATF. N188 carries N-linked (GlcNAc...) asparagine glycosylation. One copy of the BNR 2 repeat lies at 226-236; the sequence is YVTRDSGESWE. N-linked (GlcNAc...) asparagine glycosylation is found at N298, N312, and N321. A BNR 3 repeat occupies 359–369; that stretch reads YLSHDGGKSWK. N455 carries N-linked (GlcNAc...) asparagine glycosylation. The active-site Proton donor is D498. N-linked (GlcNAc...) asparagine glycosylation occurs at N544. The BNR 4 repeat unit spans residues 554–564; that stretch reads YSADGGSSWTK. N-linked (GlcNAc...) asparagine glycosylation is found at N573 and N612. The stretch at 617–626 is one BNR 5 repeat; that stretch reads YVTTDLGQTW. N638 carries N-linked (GlcNAc...) asparagine glycosylation. BNR repeat units follow at residues 658–667, 705–716, and 759–769; these read YLSRDGGLSY, YHTRNFGKKWTK, and YRSDDNGKTWV.

It belongs to the glycosyl hydrolase 74 family.

The protein localises to the secreted. It catalyses the reaction Hydrolysis of cellobiose from the reducing end of xyloglucans consisting of a beta-(1-&gt;4)-linked glucan carrying alpha-D-xylosyl groups on O-6 of the glucose residues. To be a substrate, the first residue must be unsubstituted, the second residue may bear a xylosyl group, whether further glycosylated or not, and the third residue, which becomes the new terminus by the action of the enzyme, is preferably xylosylated, but this xylose residue must not be further substituted.. In terms of biological role, oligoxyloglucan-reducing end-specific xyloglucanase involved in degradation of xyloglucans. Releases the first two glycosyl segments from oligoxyloglucans. Active against cotton xyloglucan, tamarind xyloglucan and tamarind xyloglucan oligomers. The sequence is that of Oligoxyloglucan-reducing end-specific xyloglucanase (xgcA) from Emericella nidulans (strain FGSC A4 / ATCC 38163 / CBS 112.46 / NRRL 194 / M139) (Aspergillus nidulans).